A 67-amino-acid polypeptide reads, in one-letter code: Ferredoxin (67 aa).

2 consecutive 4Fe-4S ferredoxin-type domains span residues 3-31 (WKVS…MNDE) and 36-67 (PKVE…IEEA). [4Fe-4S] cluster contacts are provided by cysteine 12, aspartate 15, and cysteine 18. An intrachain disulfide couples cysteine 22 to cysteine 49. Cysteine 57 provides a ligand contact to [4Fe-4S] cluster.

The cofactor is [4Fe-4S] cluster. It depends on [3Fe-4S] cluster as a cofactor.

Functionally, ferredoxins are iron-sulfur proteins that transfer electrons in a wide variety of metabolic reactions. The protein is Ferredoxin (fdxA) of Pyrococcus abyssi (strain GE5 / Orsay).